Consider the following 507-residue polypeptide: Phospho-2-dehydro-3-deoxyheptonate aldolase 2, chloroplastic (507 aa).

Belongs to the class-II DAHP synthase family.

The protein localises to the plastid. Its subcellular location is the chloroplast. The catalysed reaction is D-erythrose 4-phosphate + phosphoenolpyruvate + H2O = 7-phospho-2-dehydro-3-deoxy-D-arabino-heptonate + phosphate. Its pathway is metabolic intermediate biosynthesis; chorismate biosynthesis; chorismate from D-erythrose 4-phosphate and phosphoenolpyruvate: step 1/7. The protein is Phospho-2-dehydro-3-deoxyheptonate aldolase 2, chloroplastic (DHS2) of Arabidopsis thaliana (Mouse-ear cress).